A 165-amino-acid polypeptide reads, in one-letter code: Large ribosomal subunit protein uL11 (165 aa).

The protein belongs to the universal ribosomal protein uL11 family. In terms of assembly, component of the large ribosomal subunit. Mature ribosomes consist of a small (40S) and a large (60S) subunit. The 40S subunit contains about 32 different proteins and 1 molecule of RNA (18S). The 60S subunit contains 45 different proteins and 3 molecules of RNA (25S, 5.8S and 5S).

It is found in the cytoplasm. Functionally, component of the ribosome, a large ribonucleoprotein complex responsible for the synthesis of proteins in the cell. The small ribosomal subunit (SSU) binds messenger RNAs (mRNAs) and translates the encoded message by selecting cognate aminoacyl-transfer RNA (tRNA) molecules. The large subunit (LSU) contains the ribosomal catalytic site termed the peptidyl transferase center (PTC), which catalyzes the formation of peptide bonds, thereby polymerizing the amino acids delivered by tRNAs into a polypeptide chain. The nascent polypeptides leave the ribosome through a tunnel in the LSU and interact with protein factors that function in enzymatic processing, targeting, and the membrane insertion of nascent chains at the exit of the ribosomal tunnel. The polypeptide is Large ribosomal subunit protein uL11 (RPL12) (Candida albicans (strain SC5314 / ATCC MYA-2876) (Yeast)).